A 392-amino-acid chain; its full sequence is Phosphoglycerate kinase (392 aa).

Substrate contacts are provided by residues 26-28 (DLN), Arg41, 64-67 (HLGR), Arg118, and Arg151. Residues Lys202, Glu319, and 345–348 (GGDT) each bind ATP.

It belongs to the phosphoglycerate kinase family. In terms of assembly, monomer.

It is found in the cytoplasm. It carries out the reaction (2R)-3-phosphoglycerate + ATP = (2R)-3-phospho-glyceroyl phosphate + ADP. It participates in carbohydrate degradation; glycolysis; pyruvate from D-glyceraldehyde 3-phosphate: step 2/5. This chain is Phosphoglycerate kinase, found in Photobacterium profundum (strain SS9).